The chain runs to 314 residues: Quinolinate synthase (314 aa).

His27 and Ser44 together coordinate iminosuccinate. Cys89 serves as a coordination point for [4Fe-4S] cluster. Iminosuccinate-binding positions include 115 to 117 (YIN) and Ser132. Residue Cys175 coordinates [4Fe-4S] cluster. Iminosuccinate-binding positions include 201 to 203 (HPE) and Thr218. Cys271 is a [4Fe-4S] cluster binding site.

The protein belongs to the quinolinate synthase family. Type 2 subfamily. Requires [4Fe-4S] cluster as cofactor.

It localises to the cytoplasm. The catalysed reaction is iminosuccinate + dihydroxyacetone phosphate = quinolinate + phosphate + 2 H2O + H(+). The protein operates within cofactor biosynthesis; NAD(+) biosynthesis; quinolinate from iminoaspartate: step 1/1. Catalyzes the condensation of iminoaspartate with dihydroxyacetone phosphate to form quinolinate. The polypeptide is Quinolinate synthase (Ehrlichia chaffeensis (strain ATCC CRL-10679 / Arkansas)).